A 122-amino-acid polypeptide reads, in one-letter code: Large ribosomal subunit protein uL14 (122 aa).

The protein belongs to the universal ribosomal protein uL14 family. In terms of assembly, part of the 50S ribosomal subunit. Forms a cluster with proteins L3 and L19. In the 70S ribosome, L14 and L19 interact and together make contacts with the 16S rRNA in bridges B5 and B8.

Binds to 23S rRNA. Forms part of two intersubunit bridges in the 70S ribosome. This is Large ribosomal subunit protein uL14 from Rickettsia typhi (strain ATCC VR-144 / Wilmington).